A 300-amino-acid polypeptide reads, in one-letter code: Acetaldehyde dehydrogenase (300 aa).

11-14 (SGNI) is an NAD(+) binding site. Cysteine 129 functions as the Acyl-thioester intermediate in the catalytic mechanism. NAD(+)-binding positions include 160 to 168 (SVGPGTRQN) and asparagine 271.

This sequence belongs to the acetaldehyde dehydrogenase family.

It catalyses the reaction acetaldehyde + NAD(+) + CoA = acetyl-CoA + NADH + H(+). This is Acetaldehyde dehydrogenase (mhpF) from Pseudoalteromonas translucida (strain TAC 125).